The primary structure comprises 480 residues: Probable efflux pump outer membrane protein SepC (480 aa).

The first 16 residues, 1–16, serve as a signal peptide directing secretion; it reads MKTHYLSIALSVALSG. A lipid anchor (N-palmitoyl cysteine) is attached at Cys17. Cys17 is lipidated: S-diacylglycerol cysteine.

It belongs to the outer membrane factor (OMF) (TC 1.B.17) family.

The protein resides in the cell outer membrane. Functionally, probable outer membrane component of the SepABC efflux pump with unknown specificity. The protein is Probable efflux pump outer membrane protein SepC (sepC) of Pseudomonas putida (strain ATCC 700007 / DSM 6899 / JCM 31910 / BCRC 17059 / LMG 24140 / F1).